We begin with the raw amino-acid sequence, 860 residues long: Leucine--tRNA ligase (860 aa).

The 'HIGH' region motif lies at 42 to 52; that stretch reads PYPSGRLHMGH. Residues 619–623 carry the 'KMSKS' region motif; sequence KMSKS. Residue K622 coordinates ATP.

It belongs to the class-I aminoacyl-tRNA synthetase family.

The protein resides in the cytoplasm. It catalyses the reaction tRNA(Leu) + L-leucine + ATP = L-leucyl-tRNA(Leu) + AMP + diphosphate. The sequence is that of Leucine--tRNA ligase from Cronobacter sakazakii (strain ATCC BAA-894) (Enterobacter sakazakii).